A 287-amino-acid chain; its full sequence is UPF0098 protein AF_1698 (287 aa).

It belongs to the UPF0098 family.

The sequence is that of UPF0098 protein AF_1698 from Archaeoglobus fulgidus (strain ATCC 49558 / DSM 4304 / JCM 9628 / NBRC 100126 / VC-16).